The chain runs to 254 residues: Large ribosomal subunit protein uL4 (254 aa).

The protein belongs to the universal ribosomal protein uL4 family. In terms of assembly, part of the 50S ribosomal subunit.

Its function is as follows. One of the primary rRNA binding proteins, this protein initially binds near the 5'-end of the 23S rRNA. It is important during the early stages of 50S assembly. It makes multiple contacts with different domains of the 23S rRNA in the assembled 50S subunit and ribosome. Forms part of the polypeptide exit tunnel. The protein is Large ribosomal subunit protein uL4 of Methanothermobacter thermautotrophicus (strain ATCC 29096 / DSM 1053 / JCM 10044 / NBRC 100330 / Delta H) (Methanobacterium thermoautotrophicum).